We begin with the raw amino-acid sequence, 276 residues long: Octanoyltransferase LipM (276 aa).

The BPL/LPL catalytic domain maps to glycine 32–leucine 247. The Acyl-thioester intermediate role is filled by cysteine 149.

It belongs to the octanoyltransferase LipM family. As to quaternary structure, monomer.

It carries out the reaction octanoyl-[ACP] + L-lysyl-[protein] = N(6)-octanoyl-L-lysyl-[protein] + holo-[ACP] + H(+). It functions in the pathway protein modification; protein lipoylation via endogenous pathway; protein N(6)-(lipoyl)lysine from octanoyl-[acyl-carrier-protein]. In terms of biological role, catalyzes the transfer of endogenously produced octanoic acid from octanoyl-acyl-carrier-protein onto the lipoyl domain of GcvH, an intermediate carrier during protein lipoylation. This is Octanoyltransferase LipM from Macrococcus caseolyticus (strain JCSC5402) (Macrococcoides caseolyticum).